Reading from the N-terminus, the 274-residue chain is METFSLLEIFKAVILGIVQGITEWLPVSSTGHMILVDEFIKLNFSNTFISTFLVVIQFGSILAVLVIFFRKLNPFDSAKNIKQKKETVRLWLKVIIAVIPSGVIGILFEDDIDRLFFNSTVVAIALIVYGIIMIGLEKRNKRPKYKDFSQVTYKLALCIGLFQCLALIPGTSRSGSTIIGAVLLGTSRYVAAEFSFFLAIPTMLGASALKLLKAGFGFTGFEWLILGVGSVVAFVVSIVVIKFFMDYIKKHDFKVFGYYRIVLGIVVLAYFFLL.

The next 8 helical transmembrane spans lie at 7 to 27, 48 to 68, 88 to 108, 115 to 135, 151 to 171, 189 to 209, 221 to 241, and 253 to 273; these read LEIFKAVILGIVQGITEWLPV, FISTFLVVIQFGSILAVLVIF, VRLWLKVIIAVIPSGVIGILF, LFFNSTVVAIALIVYGIIMIG, VTYKLALCIGLFQCLALIPGT, YVAAEFSFFLAIPTMLGASAL, FEWLILGVGSVVAFVVSIVVI, and FKVFGYYRIVLGIVVLAYFFL.

Belongs to the UppP family.

It localises to the cell membrane. The enzyme catalyses di-trans,octa-cis-undecaprenyl diphosphate + H2O = di-trans,octa-cis-undecaprenyl phosphate + phosphate + H(+). In terms of biological role, catalyzes the dephosphorylation of undecaprenyl diphosphate (UPP). Confers resistance to bacitracin. This Clostridioides difficile (strain 630) (Peptoclostridium difficile) protein is Undecaprenyl-diphosphatase 1.